Here is a 199-residue protein sequence, read N- to C-terminus: Peroxiredoxin-1 (199 aa).

Serine 2 bears the N-acetylserine mark. A Thioredoxin domain is found at 6 to 165; it reads AKIGYPAPNF…IIRLVQAFQF (160 aa). An N6-acetyllysine; alternate modification is found at lysine 7. Lysine 7 is covalently cross-linked (Glycyl lysine isopeptide (Lys-Gly) (interchain with G-Cter in SUMO2); alternate). N6-acetyllysine occurs at positions 16 and 27. Position 32 is a phosphoserine (serine 32). An N6-acetyllysine; alternate modification is found at lysine 35. N6-succinyllysine; alternate is present on lysine 35. Cysteine 52 acts as the Cysteine sulfenic acid (-SOH) intermediate in catalysis. Threonine 90 is subject to Phosphothreonine. Lysine 120 participates in a covalent cross-link: Glycyl lysine isopeptide (Lys-Gly) (interchain with G-Cter in SUMO2). The residue at position 136 (lysine 136) is an N6-acetyllysine. Lysine 185 is covalently cross-linked (Glycyl lysine isopeptide (Lys-Gly) (interchain with G-Cter in SUMO1)). Lysine 197 is modified (N6-acetyllysine).

It belongs to the peroxiredoxin family. AhpC/Prx1 subfamily. Homodimer; disulfide-linked, upon oxidation. 5 homodimers assemble to form a ring-like decamer. Interacts with GDPD5; forms a mixed-disulfide with GDPD5. Interacts with SESN1 and SESN2. Interacts with FAM107A. Phosphorylated on Thr-90 during the M-phase, which leads to a decrease in enzymatic activity. Post-translationally, acetylation increases reducing activity and resistance to superoxidation. Deacetylated by HDAC6 which decreases reducing activity. In terms of tissue distribution, found in various tissues; high concentration in liver.

The protein localises to the cytoplasm. It catalyses the reaction a hydroperoxide + [thioredoxin]-dithiol = an alcohol + [thioredoxin]-disulfide + H2O. Thiol-specific peroxidase that catalyzes the reduction of hydrogen peroxide and organic hydroperoxides to water and alcohols, respectively. Plays a role in cell protection against oxidative stress by detoxifying peroxides and as sensor of hydrogen peroxide-mediated signaling events. Might participate in the signaling cascades of growth factors and tumor necrosis factor-alpha by regulating the intracellular concentrations of H(2)O(2). Reduces an intramolecular disulfide bond in GDPD5 that gates the ability to GDPD5 to drive postmitotic motor neuron differentiation. This chain is Peroxiredoxin-1 (Prdx1), found in Mus musculus (Mouse).